We begin with the raw amino-acid sequence, 41 residues long: Large ribosomal subunit protein bL36 (41 aa).

It belongs to the bacterial ribosomal protein bL36 family.

The polypeptide is Large ribosomal subunit protein bL36 (Maricaulis maris (strain MCS10) (Caulobacter maris)).